Reading from the N-terminus, the 396-residue chain is 1-deoxy-D-xylulose 5-phosphate reductoisomerase (396 aa).

6 residues coordinate NADPH: threonine 15, glycine 16, serine 17, isoleucine 18, glycine 41, and asparagine 130. Lysine 131 lines the 1-deoxy-D-xylulose 5-phosphate pocket. Residue glutamate 132 coordinates NADPH. Aspartate 155 contacts Mn(2+). Residues serine 156, glutamate 157, serine 181, and histidine 204 each coordinate 1-deoxy-D-xylulose 5-phosphate. Glutamate 157 contributes to the Mn(2+) binding site. Position 210 (glycine 210) interacts with NADPH. 1-deoxy-D-xylulose 5-phosphate-binding residues include serine 217, asparagine 222, lysine 223, and glutamate 226. Residue glutamate 226 participates in Mn(2+) binding.

Belongs to the DXR family. The cofactor is Mg(2+). It depends on Mn(2+) as a cofactor.

It carries out the reaction 2-C-methyl-D-erythritol 4-phosphate + NADP(+) = 1-deoxy-D-xylulose 5-phosphate + NADPH + H(+). The protein operates within isoprenoid biosynthesis; isopentenyl diphosphate biosynthesis via DXP pathway; isopentenyl diphosphate from 1-deoxy-D-xylulose 5-phosphate: step 1/6. In terms of biological role, catalyzes the NADPH-dependent rearrangement and reduction of 1-deoxy-D-xylulose-5-phosphate (DXP) to 2-C-methyl-D-erythritol 4-phosphate (MEP). This is 1-deoxy-D-xylulose 5-phosphate reductoisomerase from Bifidobacterium longum subsp. infantis (strain ATCC 15697 / DSM 20088 / JCM 1222 / NCTC 11817 / S12).